We begin with the raw amino-acid sequence, 362 residues long: Methylthioribose-1-phosphate isomerase (362 aa).

Residue Asp-252 is the Proton donor of the active site.

The protein belongs to the eIF-2B alpha/beta/delta subunits family. MtnA subfamily.

The protein resides in the cytoplasm. It localises to the nucleus. The catalysed reaction is 5-(methylsulfanyl)-alpha-D-ribose 1-phosphate = 5-(methylsulfanyl)-D-ribulose 1-phosphate. Its pathway is amino-acid biosynthesis; L-methionine biosynthesis via salvage pathway; L-methionine from S-methyl-5-thio-alpha-D-ribose 1-phosphate: step 1/6. Its function is as follows. Catalyzes the interconversion of methylthioribose-1-phosphate (MTR-1-P) into methylthioribulose-1-phosphate (MTRu-1-P). This chain is Methylthioribose-1-phosphate isomerase, found in Drosophila virilis (Fruit fly).